The following is a 1202-amino-acid chain: Caskin-2 (1202 aa).

ANK repeat units lie at residues 48–77 (DGFS…TVDI), 81–110 (NGMR…AVNA), 114–143 (DGQI…NPCL), 147–176 (AKKT…CVAL), 188–217 (NYTT…EINR), and 220–249 (KTGT…DVNI). Position 253 is a phosphotyrosine (tyrosine 253). The SH3 domain maps to 281-347 (SGILKVRALK…PPGIVEVVSK (67 aa)). Residues 355 to 460 (RLPSAPTPLR…GLHPPSLADN (106 aa)) are disordered. Residues serine 358, serine 393, serine 396, serine 403, serine 406, and serine 409 each carry the phosphoserine modification. Residues 415-425 (SAGSGQSSEGT) are compositionally biased toward polar residues. Serine 471 bears the Phosphoserine mark. SAM domains are found at residues 489–552 (KDAQ…LSIA) and 558–622 (YIPT…LAEL). Disordered regions lie at residues 676 to 1104 (LQAA…APKP) and 1116 to 1181 (GPKL…STKH). Serine 725 is subject to Phosphoserine. The segment covering 731 to 740 (NLPEGTERPP) has biased composition (basic and acidic residues). The segment covering 765–774 (SPAPGPPPGA) has biased composition (pro residues). A phosphoserine mark is found at serine 858, serine 877, serine 878, and serine 892. Residues 913–923 (PSEPPGPPAPA) are compositionally biased toward pro residues. The segment covering 940-949 (PPSRGSSGEG) has biased composition (low complexity). 2 stretches are compositionally biased toward pro residues: residues 966–978 (PAGP…PVPP) and 1018–1030 (PAAP…PGES). The segment covering 1031–1051 (PPASSLPQPEPSSLPAQGVPT) has biased composition (low complexity). Pro residues-rich tracts occupy residues 1052-1068 (PLAP…PCPG) and 1124-1133 (GPRPVPPPRP). Polar residues predominate over residues 1135 to 1151 (STGTVGPGQAQQRLEQT). A compositionally biased stretch (basic and acidic residues) spans 1161 to 1172 (AAEKSIGTKEQE).

As to quaternary structure, may not bind CASK.

It localises to the cytoplasm. This chain is Caskin-2 (CASKIN2), found in Homo sapiens (Human).